A 262-amino-acid chain; its full sequence is Transcription factor Spi-B (262 aa).

The interval 1–31 (MLALEAAQLDGPHFSCLYPDGVFYDLDSCKH) is TAD1 (Acidic). Residues 41–61 (PDSLWDWTVAPPVPATPYEAF) form a TAD2 region. Positions 140–163 (ALEVSDSESDEALVAGPEGKGSEA) are disordered. Positions 169 to 252 (LRLYQFLLGL…VKRKLTYQFD (84 aa)) form a DNA-binding region, ETS.

Belongs to the ETS family. As to quaternary structure, can form homotypic interactions. Interacts with IRF4/Pip. Interacts with JUN. Interacts with TBP. May also interact with CREBBP and EP300. Interacts with NONO/p54(nrb). As to expression, expressed in plasmacytoid dendritic cells (pDCs) and B-cells, not expressed in T-cells or granulocytes. May also be enriched in stem cell populations of the liver.

The protein localises to the nucleus. The protein resides in the cytoplasm. In terms of biological role, sequence specific transcriptional activator which binds to the PU-box, a purine-rich DNA sequence (5'-GAGGAA-3') that can act as a lymphoid-specific enhancer. Promotes development of plasmacytoid dendritic cells (pDCs), also known as type 2 DC precursors (pre-DC2) or natural interferon (IFN)-producing cells. These cells have the capacity to produce large amounts of interferon and block viral replication. May be required for B-cell receptor (BCR) signaling, which is necessary for normal B-cell development and antigenic stimulation. This Homo sapiens (Human) protein is Transcription factor Spi-B (SPIB).